Consider the following 605-residue polypeptide: IQ domain-containing protein IQM2 (605 aa).

The IQ domain maps to 105–134; sequence KHEAAIKLQKVYKSFRTRRKLADCAVLVEQ. The segment at 408-505 is disordered; that stretch reads QDKVDPSGEE…EEGETKESEV (98 aa). Positions 425 to 440 are enriched in basic and acidic residues; the sequence is SISRKQSDLETPEKME. A compositionally biased stretch (acidic residues) spans 462-480; sequence DYDSGDDEEEEEEMFELEQ. Residues 481-490 show a composition bias toward low complexity; it reads ESMPSEQSSP. Residues 491 to 505 are compositionally biased toward basic and acidic residues; sequence RGEEKEEGETKESEV.

Expressed in rosette and cauline leaves, stems, flowers and siliques, and at lower levels in roots.

Its subcellular location is the cytoplasm. The protein localises to the nucleus. Its function is as follows. May be involved in biotic and abiotic stress responses. The polypeptide is IQ domain-containing protein IQM2 (Arabidopsis thaliana (Mouse-ear cress)).